Consider the following 789-residue polypeptide: Larval serum protein 1 beta chain (789 aa).

A signal peptide spans 1-16 (MKIAIALLACLGLAAA).

Belongs to the hemocyanin family. As to quaternary structure, heterohexamer, composed of three subunits, alpha, beta and gamma. Larval hemolymph.

The protein localises to the secreted. The protein resides in the extracellular space. Larval storage protein (LSP) which may serve as a store of amino acids for synthesis of adult proteins. The protein is Larval serum protein 1 beta chain (Lsp1beta) of Drosophila melanogaster (Fruit fly).